Reading from the N-terminus, the 671-residue chain is tRNA(Met) cytidine acetyltransferase TmcA (671 aa).

Residues Gln180, 202–211, and Arg319 contribute to the ATP site; that span reads GRGKSALAGQ. The N-acetyltransferase domain occupies 356–531; that stretch reads QTLWQSDPET…SGCYTAMALL (176 aa). Residues 461–463, 468–474, Glu499, and Arg506 each bind acetyl-CoA; these read IAV and QREGTGR.

Belongs to the RNA cytidine acetyltransferase family. TmcA subfamily.

Its subcellular location is the cytoplasm. It carries out the reaction cytidine(34) in elongator tRNA(Met) + acetyl-CoA + ATP + H2O = N(4)-acetylcytidine(34) in elongator tRNA(Met) + ADP + phosphate + CoA + H(+). The catalysed reaction is 2-hydroxyisobutanoyl-CoA + L-lysyl-[protein] = N(6)-(2-hydroxyisobutanoyl)-L-lysyl-[protein] + CoA + H(+). ATP/GTP hydrolysis is stimulated by the addition of acetyl-CoA and tRNA(Met). Binding of acetyl-CoA to TmcA activates both ATPase and tRNA-binding activities. ATP promotes the 2-hydroxyisobutyryltransferase activity. Functionally, catalyzes the formation of N(4)-acetylcytidine (ac(4)C) at the wobble position of tRNA(Met), by using acetyl-CoA as an acetyl donor and ATP (or GTP). It recognizes the wobble base of tRNA(Met), thus distinguishing between tRNA(Met) and the structurally similar tRNA(Ile2). Could use an RNA helicase motor driven by ATP hydrolysis to deliver the wobble base of tRNA(Met) to the acetyltransferase domain of TmcA. Also functions as a lysine 2-hydroxyisobutyryltransferase to regulate transcription. Can specifically catalyze the 2-hydroxyisobutyrylation (Khib) of the DNA-binding protein H-NS. Hydroxyisobutyrylation of H-NS decreases its DNA-binding activity, promotes the expression of acid-resistance genes and enhances bacterial survival under extreme acid stress. In Escherichia coli (strain K12), this protein is tRNA(Met) cytidine acetyltransferase TmcA.